Consider the following 347-residue polypeptide: Histone deacetylase 11 (347 aa).

Residues 14-318 (KRWPIVYSPR…ARIIADSILN (305 aa)) form a histone deacetylase region. Histidine 143 is a catalytic residue.

Belongs to the histone deacetylase family. As to quaternary structure, interacts with HDAC6.

The protein localises to the nucleus. The catalysed reaction is N(6)-acetyl-L-lysyl-[histone] + H2O = L-lysyl-[histone] + acetate. Functionally, responsible for the deacetylation of lysine residues on the N-terminal part of the core histones (H2A, H2B, H3 and H4). Histone deacetylation gives a tag for epigenetic repression and plays an important role in transcriptional regulation, cell cycle progression and developmental events. Histone deacetylases act via the formation of large multiprotein complexes. This is Histone deacetylase 11 (Hdac11) from Mus musculus (Mouse).